A 409-amino-acid polypeptide reads, in one-letter code: Arginine biosynthesis bifunctional protein ArgJ (409 aa).

Positions 156, 182, 193, 280, 404, and 409 each coordinate substrate. The active-site Nucleophile is threonine 193.

It belongs to the ArgJ family. Heterotetramer of two alpha and two beta chains.

The protein resides in the cytoplasm. It carries out the reaction N(2)-acetyl-L-ornithine + L-glutamate = N-acetyl-L-glutamate + L-ornithine. The enzyme catalyses L-glutamate + acetyl-CoA = N-acetyl-L-glutamate + CoA + H(+). The protein operates within amino-acid biosynthesis; L-arginine biosynthesis; L-ornithine and N-acetyl-L-glutamate from L-glutamate and N(2)-acetyl-L-ornithine (cyclic): step 1/1. Its pathway is amino-acid biosynthesis; L-arginine biosynthesis; N(2)-acetyl-L-ornithine from L-glutamate: step 1/4. Its function is as follows. Catalyzes two activities which are involved in the cyclic version of arginine biosynthesis: the synthesis of N-acetylglutamate from glutamate and acetyl-CoA as the acetyl donor, and of ornithine by transacetylation between N(2)-acetylornithine and glutamate. The sequence is that of Arginine biosynthesis bifunctional protein ArgJ from Ralstonia nicotianae (strain ATCC BAA-1114 / GMI1000) (Ralstonia solanacearum).